Here is a 395-residue protein sequence, read N- to C-terminus: ATP synthase subunit a (395 aa).

5 helical membrane passes run 153 to 173 (FTNP…LVYF), 246 to 266 (HFLI…IVGF), 273 to 293 (FLSF…LVLL), 313 to 333 (MMAG…MLCM), and 339 to 359 (FIGD…ELGV).

This sequence belongs to the ATPase A chain family. In terms of assembly, F-type ATPases have 2 components, CF(1) - the catalytic core - and CF(0) - the membrane proton channel. CF(1) has five subunits: alpha(3), beta(3), gamma(1), delta(1), epsilon(1). CF(0) has three main subunits: a, b and c.

The protein resides in the mitochondrion inner membrane. Mitochondrial membrane ATP synthase (F(1)F(0) ATP synthase or Complex V) produces ATP from ADP in the presence of a proton gradient across the membrane which is generated by electron transport complexes of the respiratory chain. F-type ATPases consist of two structural domains, F(1) - containing the extramembraneous catalytic core and F(0) - containing the membrane proton channel, linked together by a central stalk and a peripheral stalk. During catalysis, ATP synthesis in the catalytic domain of F(1) is coupled via a rotary mechanism of the central stalk subunits to proton translocation. Key component of the proton channel; it may play a direct role in the translocation of protons across the membrane. The chain is ATP synthase subunit a (ATP6) from Nicotiana tabacum (Common tobacco).